Reading from the N-terminus, the 175-residue chain is Cuticle protein 16.5, isoform A (175 aa).

A run of 19 repeats spans residues 17-20 (AAPA), 25-28 (AAPA), 31-34 (AAPA), 38-41 (AAPA), 44-47 (AAPA), 51-54 (AAPA), 57-60 (AAPA), 64-67 (AAPA), 70-73 (AAPA), 77-80 (AAPA), 83-86 (AAPA), 91-94 (AAPA), 99-102 (AAPA), 106-109 (AAPA), 134-137 (AAPA), 144-147 (AAPA), 151-154 (AAPA), 158-161 (AAPA), and 165-168 (AAPA).

Component of the cuticle of migratory locust which contains more than 100 different structural proteins. The chain is Cuticle protein 16.5, isoform A from Locusta migratoria (Migratory locust).